The chain runs to 74 residues: Auswaprin-a (74 aa).

Positions 1–24 (MSSGGLLLLLGLLTLWGVLTPVSS) are cleaved as a signal peptide. Residues 27–71 (RPKKPGLCPPRPQKPCVKECKNDWSCSGQQKCCNYGCIDECRDPI) enclose the WAP domain. 4 cysteine pairs are disulfide-bonded: Cys-34/Cys-59, Cys-42/Cys-63, Cys-46/Cys-58, and Cys-52/Cys-67.

This sequence belongs to the venom waprin family. As to expression, expressed by the venom gland.

The protein resides in the secreted. Its function is as follows. Damages membranes of susceptible bacteria. Has no hemolytic activity. Not toxic to mice. Does not inhibit the proteinases elastase and cathepsin G. The protein is Auswaprin-a of Pseudechis australis (Mulga snake).